The chain runs to 168 residues: Pleiotrophin (168 aa).

Residues 1-32 form the signal peptide; it reads MQTPQFLQQRRKFAAAFLAFIFLLAVVDTAEA. 5 disulfides stabilise this stretch: cysteine 47–cysteine 76, cysteine 55–cysteine 85, cysteine 62–cysteine 89, cysteine 99–cysteine 131, and cysteine 109–cysteine 141. 2 chondroitin sulfate binding regions span residues 92–99 and 123–131; these read KKQFGAEC and KRALHNADC. A disordered region spans residues 139 to 168; the sequence is KPCGKVTKPKPQAESKKKKKEGKKQEKMLD. The chondroitin sulfate A binding stretch occupies residues 147–168; it reads PKPQAESKKKKKEGKKQEKMLD.

This sequence belongs to the pleiotrophin family. As to quaternary structure, interacts with ALK and NEK6. Interacts with PTPRZ1 (via chondroitin sulfate groups); promotes formation of homooligomers; oligomerization impairs tyrosine phosphatase activity. Forms a complex with PTPRZ1 and CTNNB1; this complex inactivates PTPRZ1 protein tyrosine phosphatase activity through PTN interaction and stimulates tyrosine phosphorylation of CTNNB1. Interacts with ITGB3 and ITGA5. Forms a complex with PTPRZ1 and integrin alpha-V/beta-3 (ITGAV:ITGB3) that stimulates endothelial cell migration through ITGB3 'Tyr-773' phosphorylation. Interacts with SDC3 (via heparan sulfate chains); this interaction mediates the neurite outgrowth-promoting signal from PTN to the cytoskeleton of growing neurites; this interaction mediates osteoblast recruitment. Interacts with GPC2 (via heparan sulfate); this interaction promotes neurite outgrowth through binding of PTN with chondroitin sulfate of proteoglycans, thereby releasing PTPRS of chondroitin sulfate proteoglycans (CSPGs) and leading to binding with heparan sulfate of GPC2. In terms of processing, phosphorylated by NEK6.

The protein localises to the secreted. In terms of biological role, secreted growth factor that mediates its signal through cell-surface proteoglycan and non-proteoglycan receptors. Binds cell-surface proteoglycan receptor via their chondroitin sulfate (CS) groups. Thereby regulates many processes like cell proliferation, cell survival, cell growth, cell differentiation and cell migration in several tissues namely neuron and bone. Also plays a role in synaptic plasticity and learning-related behavior by inhibiting long-term synaptic potentiation. Binds PTPRZ1, leading to neutralization of the negative charges of the CS chains of PTPRZ1, inducing PTPRZ1 clustering, thereby causing the dimerization and inactivation of its phosphatase activity leading to increased tyrosine phosphorylation of each of the PTPRZ1 substrates like ALK, CTNNB1 or AFAP1L2 in order to activate the PI3K-AKT pathway. Through PTPRZ1 binding controls oligodendrocyte precursor cell differentiation by enhancing the phosphorylation of AFAP1L2 in order to activate the PI3K-AKT pathway. Forms a complex with PTPRZ1 and integrin alpha-V/beta-3 (ITGAV:ITGB3) that stimulates endothelial cell migration through SRC dephosphorylation and activation that consequently leads to ITGB3 'Tyr-773' phosphorylation. In adult hippocampus promotes dendritic arborization, spine development, and functional integration and connectivity of newborn granule neurons through ALK by activating AKT signaling pathway. Binds GPC2 and chondroitin sulfate proteoglycans (CSPGs) at the neuron surface, leading to abrogation of binding between PTPRS and CSPGs and neurite outgrowth promotion. Binds SDC3 and mediates bone formation by recruiting and attaching osteoblasts/osteoblast precursors to the sites for new bone deposition. Binds ALK and promotes cell survival and cell proliferation through MAPK pathway activation. Inhibits proliferation and enhances differentiation of neural stem cells by inhibiting FGF2-induced fibroblast growth factor receptor signaling pathway. Mediates regulatory mechanisms in normal hemostasis and in hematopoietic regeneration and in maintaining the balance of myeloid and lymphoid regeneration. In addition may play a role in the female reproductive system, auditory response and the progesterone-induced decidualization pathway. In Sus scrofa (Pig), this protein is Pleiotrophin.